A 1168-amino-acid chain; its full sequence is MTILTTLIKEDNHFQDLNQVFGQANTLVTGLSPSAKVTMIAEKYAQSNQQLLLITNNLYQADKLETDLLQFVDVEELYKYPVQDIMTEEFSTQSPQLMSERIRTLTALAQGKKGLFIVPLNGLKKWLTPVEMWQNHQMTLRVGEDIDVDQFLNKLVNMGYKRESVVSHIGEFSLRGGIIDIFPLIGEPIRIELFDTEIDSIRDFDVETQRSKDNIEEVDITTASDYIITEEVISHLKEELKTAYENTRPKIDKSVRNDLKETYESFKLFESTYFDHQILRRLVAFMYETPSTIIDYFQKDAIIAVDEFNRIKETEESLTVESDSFISNVIESGNGFIGQSFIKYDDFETLIEGYPVTYFSLFATTMPIKLNHIIKFSCKPVQQFYGQYDIMRSEFQRYVNQNYHIVVLVETETKVERMQAMLSEMHIPSITKLHRSMSSGQAVIIEGSLSEGFELPDMGLVVITERELFKSKQKKQRKRTKAISNAEKIKSYQDLNVGDYIVHVHHGVGRYLGVETLEVGQIHRDYIKLQYKGTDQLFVPVDQMDQVQKYVASEDKTPKLNKLGGSEWKKTKAKVQQSVEDIAEELIDLYKEREMAEGYQYGEDTAEQTTFELDFPYELTPDQAKSIDEIKDDMQKSRPMDRLLCGDVGYGKTEVAVRAAFKAVMEGKQVAFLVPTTILAQQHYETLIERMQDFPVEIQLMSRFRTPKEIKQTKEGLKTGFVDIVVGTHKLLSKDIQYKDLGLLIVDEEQRFGVRHKERIKTLKHNVDVLTLTATPIPRTLHMSMLGVRDLSVIETPPENRFPVQTYVLEQNMSFIKEALERELSRDGQVFYLYNKVQSIYEKREQLQMLMPDANIAVAHGQMTERDLEETMLSFINNEYDILVTTTIIETGVDVPNANTLIIEDADRFGLSQLYQLRGRVGRSSRIGYAYFLHPANKVLTETAEDRLQAIKEFTELGSGFKIAMRDLNIRGAGNLLGKQQHGFIDTVGFDLYSQMLEEAVNEKRGIKEPESEVPEVEVDLNLDAYLPTEYIANEQAKIEIYKKLRKTETFDQIIDIKDELIDRFNDYPVEVARLLDIVEIKVHALHSGITLIKDKGKIIDIHLSVKATENIDGEVLFKATQPLGRTMKVGVQNNAMTITLTKQNQWLDSLKFLVKCIEESMRISDEA.

The region spanning 633-794 (DMQKSRPMDR…MLGVRDLSVI (162 aa)) is the Helicase ATP-binding domain. 646-653 (GDVGYGKT) is an ATP binding site. Positions 747-750 (DEEQ) match the DEEQ box motif. The Helicase C-terminal domain maps to 808-969 (VLEQNMSFIK…GFKIAMRDLN (162 aa)).

This sequence in the N-terminal section; belongs to the UvrB family. In the C-terminal section; belongs to the helicase family. RecG subfamily.

It is found in the cytoplasm. Functionally, couples transcription and DNA repair by recognizing RNA polymerase (RNAP) stalled at DNA lesions. Mediates ATP-dependent release of RNAP and its truncated transcript from the DNA, and recruitment of nucleotide excision repair machinery to the damaged site. This is Transcription-repair-coupling factor from Staphylococcus aureus (strain MRSA252).